An 846-amino-acid chain; its full sequence is DNA mismatch repair protein MutS (846 aa).

610–617 contacts ATP; that stretch reads GPNMGGKS.

Belongs to the DNA mismatch repair MutS family.

This protein is involved in the repair of mismatches in DNA. It is possible that it carries out the mismatch recognition step. This protein has a weak ATPase activity. The polypeptide is DNA mismatch repair protein MutS (Legionella pneumophila (strain Paris)).